Here is a 414-residue protein sequence, read N- to C-terminus: Esterase FrsA (414 aa).

The protein belongs to the FrsA family.

It catalyses the reaction a carboxylic ester + H2O = an alcohol + a carboxylate + H(+). In terms of biological role, catalyzes the hydrolysis of esters. The chain is Esterase FrsA from Escherichia coli O6:K15:H31 (strain 536 / UPEC).